The following is an 85-amino-acid chain: Toxin CsE8 (85 aa).

Positions 1 to 19 are cleaved as a signal peptide; that stretch reads MNSLLMITACLVLFGTVWS. The LCN-type CS-alpha/beta domain maps to 20–83; that stretch reads EKGYLVHEDT…TWPLIGKLCG (64 aa). Intrachain disulfides connect Cys31-Cys82, Cys35-Cys58, Cys44-Cys63, and Cys48-Cys65. At Cys82 the chain carries Cysteine amide.

Belongs to the long (4 C-C) scorpion toxin superfamily. Sodium channel inhibitor family. Beta subfamily. In terms of tissue distribution, expressed by the venom gland.

The protein localises to the secreted. Its function is as follows. Beta toxins bind voltage-independently at site-4 of sodium channels (Nav) and shift the voltage of activation toward more negative potentials thereby affecting sodium channel activation and promoting spontaneous and repetitive firing. The polypeptide is Toxin CsE8 (Centruroides sculpturatus (Arizona bark scorpion)).